Here is a 396-residue protein sequence, read N- to C-terminus: Elongation factor Tu (396 aa).

The tr-type G domain occupies 10-206 (KPHVNVGTIG…ALDSYIPDPE (197 aa)). Residues 19 to 26 (GHVDHGKT) are G1. 19–26 (GHVDHGKT) provides a ligand contact to GTP. Thr-26 lines the Mg(2+) pocket. The tract at residues 60–64 (GITIN) is G2. Residues 81–84 (DCPG) are G3. Residues 81 to 85 (DCPGH) and 136 to 139 (NKCD) each bind GTP. The interval 136–139 (NKCD) is G4. The segment at 174–176 (SAL) is G5.

The protein belongs to the TRAFAC class translation factor GTPase superfamily. Classic translation factor GTPase family. EF-Tu/EF-1A subfamily. In terms of assembly, monomer.

It localises to the cytoplasm. The catalysed reaction is GTP + H2O = GDP + phosphate + H(+). In terms of biological role, GTP hydrolase that promotes the GTP-dependent binding of aminoacyl-tRNA to the A-site of ribosomes during protein biosynthesis. This is Elongation factor Tu from Dechloromonas aromatica (strain RCB).